A 591-amino-acid polypeptide reads, in one-letter code: V-type ATP synthase alpha chain (591 aa).

233-240 (GPFGAGKT) contacts ATP.

Belongs to the ATPase alpha/beta chains family.

It catalyses the reaction ATP + H2O + 4 H(+)(in) = ADP + phosphate + 5 H(+)(out). In terms of biological role, produces ATP from ADP in the presence of a proton gradient across the membrane. The V-type alpha chain is a catalytic subunit. In Streptococcus pyogenes serotype M12 (strain MGAS2096), this protein is V-type ATP synthase alpha chain.